We begin with the raw amino-acid sequence, 311 residues long: Coproporphyrin III ferrochelatase 1 (311 aa).

Fe-coproporphyrin III contacts are provided by residues Tyr-12, Arg-29, 45 to 46, Ser-53, and Tyr-124; that span reads RY. Fe(2+) is bound by residues His-182 and Glu-263.

Belongs to the ferrochelatase family.

The protein localises to the cytoplasm. The enzyme catalyses Fe-coproporphyrin III + 2 H(+) = coproporphyrin III + Fe(2+). It participates in porphyrin-containing compound metabolism; protoheme biosynthesis. Its function is as follows. Involved in coproporphyrin-dependent heme b biosynthesis. Catalyzes the insertion of ferrous iron into coproporphyrin III to form Fe-coproporphyrin III. This is Coproporphyrin III ferrochelatase 1 from Bacillus cereus (strain ATCC 10987 / NRS 248).